The chain runs to 411 residues: Histone-lysine N-methyltransferase SUV39H1-A (411 aa).

The Chromo domain maps to 43–101; it reads YEVEYLCNYKKHKGREFFLVKWKGYEESENTWEPLKNLKCPILLHQFRKDMKAALLQAN. The Pre-SET domain maps to 178–239; sequence VGCECEDCVS…DCANRVVQRG (62 aa). Residues C180, C182, C185, C193, C194, C221, C225, C227, and C231 each coordinate Zn(2+). The SET domain maps to 242-365; it reads YDLCIFKTDN…AGEELTFDYK (124 aa). S-adenosyl-L-methionine is bound by residues 253-255, Y296, and 322-323; these read RGW and NH. Zn(2+) contacts are provided by C325, C399, C401, and C406. The Post-SET domain maps to 395-411; the sequence is VHMECKCGVRNCRKYLF.

This sequence belongs to the class V-like SAM-binding methyltransferase superfamily. Histone-lysine methyltransferase family. Suvar3-9 subfamily. In terms of tissue distribution, expressed ubuitiously.

It is found in the nucleus. The protein resides in the chromosome. The protein localises to the centromere. It catalyses the reaction N(6)-methyl-L-lysyl(9)-[histone H3] + S-adenosyl-L-methionine = N(6),N(6)-dimethyl-L-lysyl(9)-[histone H3] + S-adenosyl-L-homocysteine + H(+). It carries out the reaction N(6),N(6)-dimethyl-L-lysyl(9)-[histone H3] + S-adenosyl-L-methionine = N(6),N(6),N(6)-trimethyl-L-lysyl(9)-[histone H3] + S-adenosyl-L-homocysteine + H(+). Histone methyltransferase that specifically trimethylates 'Lys-9' of histone H3 using monomethylated H3 'Lys-9' as substrate. H3 'Lys-9' trimethylation represents a specific tag for epigenetic transcriptional repression by recruiting HP1 (CBX1, CBX3 and/or CBX5) proteins to methylated histones. Mainly functions in heterochromatin regions, thereby playing a central role in the establishment of constitutive heterochromatin at pericentric and telomere regions. H3 'Lys-9' trimethylation is also required to direct DNA methylation at pericentric repeats. SUV39H1 is targeted to histone H3 via its interaction with RB1 and is involved in many processes, such as regulation of organ-specific terminal differentiation during development. In Danio rerio (Zebrafish), this protein is Histone-lysine N-methyltransferase SUV39H1-A (suv39h1a).